The chain runs to 502 residues: Tubulin gamma chain (502 aa).

Over residues glutamate 51–proline 68 the composition is skewed to polar residues. The tract at residues glutamate 51–arginine 73 is disordered. Alanine 169–glycine 175 contributes to the GTP binding site. Residues aspartate 473–aspartate 482 are compositionally biased toward acidic residues. Residues aspartate 473–isoleucine 502 form a disordered region.

The protein belongs to the tubulin family.

Its subcellular location is the cytoplasm. The protein localises to the cytoskeleton. The protein resides in the microtubule organizing center. It is found in the spindle pole body. Tubulin is the major constituent of microtubules. The gamma chain is found at microtubule organizing centers (MTOC) such as the spindle poles or the centrosome, suggesting that it is involved in the minus-end nucleation of microtubule assembly. This Candida albicans (Yeast) protein is Tubulin gamma chain (TUB4).